A 167-amino-acid chain; its full sequence is Heme-degrading monooxygenase (167 aa).

An important for catalysis region spans residues 1-50 (MKKVFITTGTEHYLRQLMANYTGGNVTLLQNFSQSLLYQESTGEKLFQEG). The ABM domain occupies 67–154 (VVVFEYIHLR…NNTQSGFSHE (88 aa)).

The protein belongs to the antibiotic biosynthesis monooxygenase family. Monomer.

The protein resides in the cytoplasm. In terms of biological role, catalyzes the degradation of heme to biliverdin in the presence of a suitable electron donor such as ascorbate, with the subsequent release of iron. Hardly any CO is released by the heme degradation reaction. Binds heme. Allows bacterial pathogens to use the host heme as an iron source. Release of iron from heme may play a crucial role in the pathogenicity of L.monocytogenes. The polypeptide is Heme-degrading monooxygenase (Listeria monocytogenes serovar 1/2a (strain ATCC BAA-679 / EGD-e)).